The chain runs to 456 residues: Probable glycine dehydrogenase (decarboxylating) subunit 1 (456 aa).

Belongs to the GcvP family. N-terminal subunit subfamily. As to quaternary structure, the glycine cleavage system is composed of four proteins: P, T, L and H. In this organism, the P 'protein' is a heterodimer of two subunits.

The enzyme catalyses N(6)-[(R)-lipoyl]-L-lysyl-[glycine-cleavage complex H protein] + glycine + H(+) = N(6)-[(R)-S(8)-aminomethyldihydrolipoyl]-L-lysyl-[glycine-cleavage complex H protein] + CO2. Its function is as follows. The glycine cleavage system catalyzes the degradation of glycine. The P protein binds the alpha-amino group of glycine through its pyridoxal phosphate cofactor; CO(2) is released and the remaining methylamine moiety is then transferred to the lipoamide cofactor of the H protein. The sequence is that of Probable glycine dehydrogenase (decarboxylating) subunit 1 from Legionella pneumophila subsp. pneumophila (strain Philadelphia 1 / ATCC 33152 / DSM 7513).